The following is a 258-amino-acid chain: Tryptophan synthase alpha chain (258 aa).

Catalysis depends on proton acceptor residues glutamate 52 and aspartate 63.

The protein belongs to the TrpA family. Tetramer of two alpha and two beta chains.

The catalysed reaction is (1S,2R)-1-C-(indol-3-yl)glycerol 3-phosphate + L-serine = D-glyceraldehyde 3-phosphate + L-tryptophan + H2O. It participates in amino-acid biosynthesis; L-tryptophan biosynthesis; L-tryptophan from chorismate: step 5/5. In terms of biological role, the alpha subunit is responsible for the aldol cleavage of indoleglycerol phosphate to indole and glyceraldehyde 3-phosphate. This Streptococcus pneumoniae (strain ATCC 700669 / Spain 23F-1) protein is Tryptophan synthase alpha chain.